Reading from the N-terminus, the 203-residue chain is HTH-type transcriptional regulator BetI (203 aa).

Residues 8 to 68 (PVRRKALVDA…ATIRSLLGKL (61 aa)) form the HTH tetR-type domain. A DNA-binding region (H-T-H motif) is located at residues 31-50 (TMSEIARTAGVSPALAHHYF).

Its pathway is amine and polyamine biosynthesis; betaine biosynthesis via choline pathway [regulation]. Functionally, repressor involved in the biosynthesis of the osmoprotectant glycine betaine. It represses transcription of the choline transporter BetT and the genes of BetAB involved in the synthesis of glycine betaine. The polypeptide is HTH-type transcriptional regulator BetI (Rhizobium meliloti (strain 1021) (Ensifer meliloti)).